We begin with the raw amino-acid sequence, 75 residues long: DNA-directed RNA polymerase subunit Rpo5 (75 aa).

This sequence belongs to the archaeal Rpo5/eukaryotic RPB5 RNA polymerase subunit family. In terms of assembly, part of the RNA polymerase complex.

The protein resides in the cytoplasm. The catalysed reaction is RNA(n) + a ribonucleoside 5'-triphosphate = RNA(n+1) + diphosphate. Functionally, DNA-dependent RNA polymerase (RNAP) catalyzes the transcription of DNA into RNA using the four ribonucleoside triphosphates as substrates. This chain is DNA-directed RNA polymerase subunit Rpo5, found in Pyrobaculum aerophilum (strain ATCC 51768 / DSM 7523 / JCM 9630 / CIP 104966 / NBRC 100827 / IM2).